Consider the following 119-residue polypeptide: Large ribosomal subunit protein uL14c (119 aa).

Belongs to the universal ribosomal protein uL14 family. Part of the 50S ribosomal subunit.

It is found in the plastid. The protein resides in the chloroplast. Its function is as follows. Binds to 23S rRNA. The sequence is that of Large ribosomal subunit protein uL14c from Ostreococcus tauri.